The chain runs to 817 residues: Trehalose-phosphatase (817 aa).

The glycosyltransferase stretch occupies residues 1 to 547; that stretch reads MSVYGKIPST…LAATKTDQRI (547 aa).

This sequence in the N-terminal section; belongs to the glycosyltransferase 20 family. In the C-terminal section; belongs to the trehalose phosphatase family. As to quaternary structure, component of the trehalose synthase complex that contains at least tps1, ntp1, and tpp1. Interacts with tps1. Interacts with ntp1. Mg(2+) is required as a cofactor.

The enzyme catalyses alpha,alpha-trehalose 6-phosphate + H2O = alpha,alpha-trehalose + phosphate. It participates in carbohydrate biosynthesis. Functionally, phosphatase catalytic subunit of the trehalose synthase complex that catalyzes the production of trehalose from glucose-6-phosphate and UDP-alpha-D-glucose in a two step process. The disaccharide trehalose serves as a storage carbohydrate that is mobilized during nutrient stress and spore germination. Together with ntp1, regulates the level of trehalose as a protectant for cell integrity during thermal, osmotic, and oxidative stress. This Schizosaccharomyces pombe (strain 972 / ATCC 24843) (Fission yeast) protein is Trehalose-phosphatase.